A 367-amino-acid chain; its full sequence is DNA polymerase IV (367 aa).

In terms of domain architecture, UmuC spans 14-198; sequence IIHIDMDAFF…LPIEKFHGVG (185 aa). Residues Asp18 and Asp116 each coordinate Mg(2+). Glu117 is an active-site residue.

This sequence belongs to the DNA polymerase type-Y family. Monomer. Requires Mg(2+) as cofactor.

The protein resides in the cytoplasm. It carries out the reaction DNA(n) + a 2'-deoxyribonucleoside 5'-triphosphate = DNA(n+1) + diphosphate. Its function is as follows. Poorly processive, error-prone DNA polymerase involved in untargeted mutagenesis. Copies undamaged DNA at stalled replication forks, which arise in vivo from mismatched or misaligned primer ends. These misaligned primers can be extended by PolIV. Exhibits no 3'-5' exonuclease (proofreading) activity. May be involved in translesional synthesis, in conjunction with the beta clamp from PolIII. This is DNA polymerase IV from Streptococcus thermophilus (strain CNRZ 1066).